The following is a 274-amino-acid chain: 4-deoxy-L-threo-5-hexosulose-uronate ketol-isomerase (274 aa).

Positions 192, 194, 199, and 241 each coordinate Zn(2+).

It belongs to the KduI family. The cofactor is Zn(2+).

The catalysed reaction is 5-dehydro-4-deoxy-D-glucuronate = 3-deoxy-D-glycero-2,5-hexodiulosonate. Its pathway is glycan metabolism; pectin degradation; 2-dehydro-3-deoxy-D-gluconate from pectin: step 4/5. Catalyzes the isomerization of 5-dehydro-4-deoxy-D-glucuronate to 3-deoxy-D-glycero-2,5-hexodiulosonate. The chain is 4-deoxy-L-threo-5-hexosulose-uronate ketol-isomerase from Cereibacter sphaeroides (strain ATCC 17025 / ATH 2.4.3) (Rhodobacter sphaeroides).